Consider the following 643-residue polypeptide: Protein RTF1 homolog (643 aa).

Disordered regions lie at residues 1-107 and 124-262; these read MGDL…YKNE and ILSE…SDVP. G2 is modified (N-acetylglycine). Basic and acidic residues predominate over residues 65 to 77; that stretch reads KRLEAEREDRAAR. The residue at position 87 (S87) is a Phosphoserine. Residues 124–157 are compositionally biased toward basic and acidic residues; it reads ILSERADKKGDKNFTEKLRSKRESEKTPVSKKET. Low complexity predominate over residues 162 to 171; sequence ASRGVRSSAR. Positions 172–188 are enriched in basic and acidic residues; the sequence is SADRAAAKDDALNELRA. The span at 225 to 235 shows a compositional bias: low complexity; it reads SSNLSSSSQSD. In terms of domain architecture, Plus3 spans 261-396; that stretch reads VPTFEDVKEV…KKEAIQRTNS (136 aa).

As to quaternary structure, component of the nuclear PAF1 complex (PAF1C), which consists of VIP2/ELF7/PAF1, VIP3/SKI8/WDR61, VIP4/LEO1, VIP5/RTF1, VIP6/ELF8/CTR9 and CDC73.

The protein localises to the nucleus. Component of the PAF1 complex (PAF1C) which is involved in histone modifications such as methylation on histone H3 'Lys-4' (H3K4me3). Involved in regulation of flowering time. Required for the expression of the flowering repressors and FLC and MADS-box genes of the MAF family. Involved in the control of seed dormancy and germination. The sequence is that of Protein RTF1 homolog from Arabidopsis thaliana (Mouse-ear cress).